The chain runs to 723 residues: tRNA (guanine(27)-N(2))-dimethyltransferase (723 aa).

Positions M1–L10 are enriched in acidic residues. Residues M1–E72 form a disordered region. T23 is subject to Phosphothreonine. Positions P32–P44 are enriched in low complexity. Residues D45–A59 are compositionally biased toward pro residues. S61 carries the phosphoserine modification. Residues H128 to R132 carry the Nucleolar localization signal motif. Residues Y177–H199 form a C2H2-type zinc finger. The region spanning E220 to L679 is the Trm1 methyltransferase domain. Positions 253, 300, 348, and 349 each coordinate S-adenosyl-L-methionine. Zn(2+)-binding residues include C479, C482, C504, and C506. A Glycyl lysine isopeptide (Lys-Gly) (interchain with G-Cter in SUMO2) cross-link involves residue K576. Residue S603 is modified to Phosphoserine.

Belongs to the class I-like SAM-binding methyltransferase superfamily. Trm1 family.

The protein resides in the nucleus. It is found in the nucleolus. It carries out the reaction guanosine(27) in tRNA(Tyr) + 2 S-adenosyl-L-methionine = N(2)-dimethylguanosine(27) in tRNA(Tyr) + 2 S-adenosyl-L-homocysteine + 2 H(+). In terms of biological role, specifically dimethylates a single guanine residue at position 27 of tRNA(Tyr) using S-adenosyl-L-methionine as donor of the methyl groups. Dimethylation at position 27 of tRNA(Tyr) is required for efficient translation of tyrosine codons. Also required to maintain 3-(3-amino-3-carboxypropyl)uridine (acp3U) in the D-loop of several cytoplasmic tRNAs. The polypeptide is tRNA (guanine(27)-N(2))-dimethyltransferase (Rattus norvegicus (Rat)).